The sequence spans 377 residues: Testis-expressed protein 13A (377 aa).

Residues Trp-92–Pro-377 form a required for repression of transcription region. A coiled-coil region spans residues Gln-122–Arg-156. The LRR repeat unit spans residues Glu-142–Ala-165. The RanBP2-type zinc finger occupies Arg-345 to Gly-369. Zn(2+) contacts are provided by Cys-351, Cys-354, Cys-365, and Cys-368.

This sequence belongs to the TEX13 family. In terms of assembly, interacts with CNOT1; the interaction may inhibit CNOT1 binding to mRNA and subsequently CNOT1-mediated mRNA degradation.

In terms of biological role, binds to ssRNA containing the consensus sequence 5'-AGGUAA-3'. Plays a role in transcriptional repression. Required for rapid sperm motility and timely degradation of mRNA via its interaction with CNOT1. The protein is Testis-expressed protein 13A of Mus musculus (Mouse).